A 368-amino-acid polypeptide reads, in one-letter code: CCA-adding enzyme (368 aa).

2 residues coordinate ATP: Gly8 and Arg11. CTP is bound by residues Gly8 and Arg11. Mg(2+) contacts are provided by Asp21 and Asp23. The ATP site is built by Arg91, Arg137, and Arg140. Arg91, Arg137, and Arg140 together coordinate CTP.

The protein belongs to the tRNA nucleotidyltransferase/poly(A) polymerase family. Bacterial CCA-adding enzyme type 2 subfamily. Requires Mg(2+) as cofactor.

It carries out the reaction a tRNA precursor + 2 CTP + ATP = a tRNA with a 3' CCA end + 3 diphosphate. The enzyme catalyses a tRNA with a 3' CCA end + 2 CTP + ATP = a tRNA with a 3' CCACCA end + 3 diphosphate. Catalyzes the addition and repair of the essential 3'-terminal CCA sequence in tRNAs without using a nucleic acid template. Adds these three nucleotides in the order of C, C, and A to the tRNA nucleotide-73, using CTP and ATP as substrates and producing inorganic pyrophosphate. tRNA 3'-terminal CCA addition is required both for tRNA processing and repair. Also involved in tRNA surveillance by mediating tandem CCA addition to generate a CCACCA at the 3' terminus of unstable tRNAs. While stable tRNAs receive only 3'-terminal CCA, unstable tRNAs are marked with CCACCA and rapidly degraded. This chain is CCA-adding enzyme, found in Pseudomonas putida (strain ATCC 700007 / DSM 6899 / JCM 31910 / BCRC 17059 / LMG 24140 / F1).